A 61-amino-acid chain; its full sequence is Large ribosomal subunit protein eL20 (61 aa).

This sequence belongs to the eukaryotic ribosomal protein eL20 family. In terms of assembly, part of the 50S ribosomal subunit. Binds 23S rRNA.

This is Large ribosomal subunit protein eL20 from Methanosarcina mazei (strain ATCC BAA-159 / DSM 3647 / Goe1 / Go1 / JCM 11833 / OCM 88) (Methanosarcina frisia).